The following is a 230-amino-acid chain: ATP phosphoribosyltransferase (230 aa).

It belongs to the ATP phosphoribosyltransferase family. Short subfamily. Heteromultimer composed of HisG and HisZ subunits.

The protein localises to the cytoplasm. The enzyme catalyses 1-(5-phospho-beta-D-ribosyl)-ATP + diphosphate = 5-phospho-alpha-D-ribose 1-diphosphate + ATP. Its pathway is amino-acid biosynthesis; L-histidine biosynthesis; L-histidine from 5-phospho-alpha-D-ribose 1-diphosphate: step 1/9. Catalyzes the condensation of ATP and 5-phosphoribose 1-diphosphate to form N'-(5'-phosphoribosyl)-ATP (PR-ATP). Has a crucial role in the pathway because the rate of histidine biosynthesis seems to be controlled primarily by regulation of HisG enzymatic activity. This Agrobacterium fabrum (strain C58 / ATCC 33970) (Agrobacterium tumefaciens (strain C58)) protein is ATP phosphoribosyltransferase.